We begin with the raw amino-acid sequence, 360 residues long: S-adenosylmethionine:tRNA ribosyltransferase-isomerase (360 aa).

This sequence belongs to the QueA family. Monomer.

The protein resides in the cytoplasm. It carries out the reaction 7-aminomethyl-7-carbaguanosine(34) in tRNA + S-adenosyl-L-methionine = epoxyqueuosine(34) in tRNA + adenine + L-methionine + 2 H(+). It participates in tRNA modification; tRNA-queuosine biosynthesis. Its function is as follows. Transfers and isomerizes the ribose moiety from AdoMet to the 7-aminomethyl group of 7-deazaguanine (preQ1-tRNA) to give epoxyqueuosine (oQ-tRNA). This chain is S-adenosylmethionine:tRNA ribosyltransferase-isomerase, found in Burkholderia pseudomallei (strain K96243).